A 136-amino-acid chain; its full sequence is 6,7-dimethyl-8-ribityllumazine synthase (136 aa).

5-amino-6-(D-ribitylamino)uracil is bound by residues phenylalanine 11, 43 to 45, and 67 to 69; these read VYD and CVI. 72–73 contributes to the (2S)-2-hydroxy-3-oxobutyl phosphate binding site; that stretch reads DT. Catalysis depends on histidine 75, which acts as the Proton donor. Leucine 100 is a 5-amino-6-(D-ribitylamino)uracil binding site. Position 115 (arginine 115) interacts with (2S)-2-hydroxy-3-oxobutyl phosphate.

The protein belongs to the DMRL synthase family. Forms an icosahedral capsid composed of 60 subunits, arranged as a dodecamer of pentamers.

The enzyme catalyses (2S)-2-hydroxy-3-oxobutyl phosphate + 5-amino-6-(D-ribitylamino)uracil = 6,7-dimethyl-8-(1-D-ribityl)lumazine + phosphate + 2 H2O + H(+). It functions in the pathway cofactor biosynthesis; riboflavin biosynthesis; riboflavin from 2-hydroxy-3-oxobutyl phosphate and 5-amino-6-(D-ribitylamino)uracil: step 1/2. In terms of biological role, catalyzes the formation of 6,7-dimethyl-8-ribityllumazine by condensation of 5-amino-6-(D-ribitylamino)uracil with 3,4-dihydroxy-2-butanone 4-phosphate. This is the penultimate step in the biosynthesis of riboflavin. The polypeptide is 6,7-dimethyl-8-ribityllumazine synthase (Methanococcus aeolicus (strain ATCC BAA-1280 / DSM 17508 / OCM 812 / Nankai-3)).